A 220-amino-acid polypeptide reads, in one-letter code: Artemin (220 aa).

A signal peptide spans 1–39 (MELGLGGLSTLSHCPWPRQQPALWPTLAALALLSSVAEA). Positions 40-107 (SLGSAPRSPA…ALPRGGRAAR (68 aa)) are excised as a propeptide. The segment at 41 to 121 (LGSAPRSPAP…GSRARAAGAR (81 aa)) is disordered. Pro residues-rich tracts occupy residues 47-58 (SPAPREGPPPVL) and 81-98 (PPPQ…PPSA). The span at 99–121 (LPRGGRAARAGGPGSRARAAGAR) shows a compositional bias: low complexity. Intrachain disulfides connect cysteine 123-cysteine 188, cysteine 150-cysteine 216, and cysteine 154-cysteine 218. Residue asparagine 202 is glycosylated (N-linked (GlcNAc...) asparagine).

This sequence belongs to the TGF-beta family. GDNF subfamily. Homodimer; disulfide-linked. Interacts with GFRA3 coreceptor and RET: forms a 2:2:2 ternary complex composed of ARTN ligand, GFRA3 and RET receptor. Ubiquitous. Expressed at high levels in peripheral tissues including prostate, placenta, pancreas, heart, kidney, pituitary gland, lung and testis. Expressed at low levels in the brain.

It localises to the secreted. Its function is as follows. Growth factor that supports the survival of sensory and sympathetic peripheral neurons in culture and also supports the survival of dopaminergic neurons of the ventral mid-brain. Acts by binding to its coreceptor, GFRA3, leading to autophosphorylation and activation of the RET receptor. Strong attractant of gut hematopoietic cells thus promoting the formation Peyer's patch-like structures, a major component of the gut-associated lymphoid tissue. This is Artemin from Homo sapiens (Human).